The chain runs to 380 residues: Cytochrome b (380 aa).

4 helical membrane-spanning segments follow: residues 34–54 (FGSL…LLAA), 78–99 (WLIR…YLHI), 114–134 (WNTG…GYVL), and 179–199 (FFTL…IHLT). H84 and H98 together coordinate heme b. Positions 183 and 197 each coordinate heme b. H202 is an a ubiquinone binding site. The next 4 helical transmembrane spans lie at 227-247 (TKDI…ALFS), 289-309 (LGGV…PLLH), 321-341 (LSQL…WIGS), and 348-368 (FIII…ILFP).

This sequence belongs to the cytochrome b family. As to quaternary structure, the cytochrome bc1 complex contains 11 subunits: 3 respiratory subunits (MT-CYB, CYC1 and UQCRFS1), 2 core proteins (UQCRC1 and UQCRC2) and 6 low-molecular weight proteins (UQCRH/QCR6, UQCRB/QCR7, UQCRQ/QCR8, UQCR10/QCR9, UQCR11/QCR10 and a cleavage product of UQCRFS1). This cytochrome bc1 complex then forms a dimer. Requires heme b as cofactor.

Its subcellular location is the mitochondrion inner membrane. Component of the ubiquinol-cytochrome c reductase complex (complex III or cytochrome b-c1 complex) that is part of the mitochondrial respiratory chain. The b-c1 complex mediates electron transfer from ubiquinol to cytochrome c. Contributes to the generation of a proton gradient across the mitochondrial membrane that is then used for ATP synthesis. This Eudyptes chrysolophus (Macaroni penguin) protein is Cytochrome b (MT-CYB).